A 473-amino-acid chain; its full sequence is Ral-GDS-related protein (473 aa).

The disordered stretch occupies residues 117 to 215 (EPNEAKPDDP…NQPSEELPDM (99 aa)). Over residues 134-157 (ALTMPALEPAPPLLADLGPALEPE) the composition is skewed to low complexity. A compositionally biased stretch (pro residues) spans 173-185 (GPAPAPGEGPPPG). In terms of domain architecture, Ras-GEF spans 219 to 471 (PPRLLAEQLT…YKLSCQLEPE (253 aa)).

Its subcellular location is the cytoplasmic vesicle. This Homo sapiens (Human) protein is Ral-GDS-related protein (RGL4).